A 242-amino-acid chain; its full sequence is Beta-carotene ketolase (242 aa).

The catalysed reaction is all-trans-beta-carotene + 2 AH2 + 2 O2 = echinenone + 2 A + 3 H2O. It carries out the reaction echinenone + 2 AH2 + 2 O2 = canthaxanthin + 2 A + 3 H2O. Its pathway is carotenoid biosynthesis; astaxanthin biosynthesis. Converts beta-carotene to canthaxanthin via echinenone. The polypeptide is Beta-carotene ketolase (Paracoccus sp. (strain PC1) (Alcaligenes sp. (strain PC1))).